The primary structure comprises 166 residues: NAD(P)H-quinone oxidoreductase subunit I, chloroplastic (166 aa).

4Fe-4S ferredoxin-type domains are found at residues 55–84 (GRIH…VDWK) and 95–124 (LNYS…MTEE). C64, C67, C70, C74, C104, C107, C110, and C114 together coordinate [4Fe-4S] cluster.

Belongs to the complex I 23 kDa subunit family. As to quaternary structure, NDH is composed of at least 16 different subunits, 5 of which are encoded in the nucleus. It depends on [4Fe-4S] cluster as a cofactor.

The protein localises to the plastid. It localises to the chloroplast thylakoid membrane. The enzyme catalyses a plastoquinone + NADH + (n+1) H(+)(in) = a plastoquinol + NAD(+) + n H(+)(out). It carries out the reaction a plastoquinone + NADPH + (n+1) H(+)(in) = a plastoquinol + NADP(+) + n H(+)(out). In terms of biological role, NDH shuttles electrons from NAD(P)H:plastoquinone, via FMN and iron-sulfur (Fe-S) centers, to quinones in the photosynthetic chain and possibly in a chloroplast respiratory chain. The immediate electron acceptor for the enzyme in this species is believed to be plastoquinone. Couples the redox reaction to proton translocation, and thus conserves the redox energy in a proton gradient. The polypeptide is NAD(P)H-quinone oxidoreductase subunit I, chloroplastic (Encelia californica (Bush sunflower)).